Reading from the N-terminus, the 822-residue chain is AP-1 complex subunit gamma-1 (822 aa).

The span at 593-604 (NGPSEIVQTNGE) shows a compositional bias: polar residues. Residues 593 to 627 (NGPSEIVQTNGETEPAPLETKPPPSGPQPTSQAND) form a disordered region. Positions 702–817 (PGIPSITAYS…QDLAEVNNFP (116 aa)) constitute a GAE domain.

Belongs to the adaptor complexes large subunit family. Adaptor protein complex 1 (AP-1) is a heterotetramer composed of two large adaptins (gamma-type subunit AP1G1 and beta-type subunit AP1B1), a medium adaptin (mu-type subunit AP1M1 or AP1M2) and a small adaptin (sigma-type subunit AP1S1 or AP1S2 or AP1S3). Interacts (via GAE domain) with RABEP1. Interacts with EPS15. Interacts with SYNRG/gamma-synergin. Interacts (via GAE domain) with AP1AR (via coiled-coil domain). Interacts with CLN3 (via dileucine motif); this interaction facilitates lysosomal targeting. Interacts (via GAE domain) with AFTPH/aftiphilin; the interaction is required to recruit AFTPH/aftiphilin to the perinuclear region of the cell. In terms of tissue distribution, widely expressed.

It localises to the golgi apparatus. The protein localises to the cytoplasmic vesicle. It is found in the clathrin-coated vesicle membrane. Its subcellular location is the cytoplasm. The protein resides in the perinuclear region. It localises to the clathrin-coated vesicle. The protein localises to the membrane. It is found in the clathrin-coated pit. Its function is as follows. Subunit of clathrin-associated adaptor protein complex 1 that plays a role in protein sorting in the late-Golgi/trans-Golgi network (TGN) and/or endosomes. The AP complexes mediate both the recruitment of clathrin to membranes and the recognition of sorting signals within the cytosolic tails of transmembrane cargo molecules. In association with AFTPH/aftiphilin in the aftiphilin/p200/gamma-synergin complex, involved in the trafficking of transferrin from early to recycling endosomes, and the membrane trafficking of furin and the lysosomal enzyme cathepsin D between the trans-Golgi network (TGN) and endosomes. This is AP-1 complex subunit gamma-1 (Ap1g1) from Mus musculus (Mouse).